Here is a 600-residue protein sequence, read N- to C-terminus: FERM domain-containing protein 3 (600 aa).

Positions 31–311 (MRCTIRLLDD…ENQAFYKYAK (281 aa)) constitute an FERM domain. A disordered region spans residues 413–440 (SAPVLGNSPARGLETTADVTHDEEESIR). A helical transmembrane segment spans residues 534 to 554 (LLLAAIGLLMVVLPLLLILLE).

The protein resides in the membrane. The sequence is that of FERM domain-containing protein 3 (frmd3) from Xenopus tropicalis (Western clawed frog).